Consider the following 132-residue polypeptide: Small ribosomal subunit protein uS8c (132 aa).

This sequence belongs to the universal ribosomal protein uS8 family. As to quaternary structure, part of the 30S ribosomal subunit.

The protein localises to the plastid. It localises to the chloroplast. In terms of biological role, one of the primary rRNA binding proteins, it binds directly to 16S rRNA central domain where it helps coordinate assembly of the platform of the 30S subunit. This is Small ribosomal subunit protein uS8c (rps8) from Guillardia theta (Cryptophyte).